The primary structure comprises 236 residues: Cyclin-P3-1 (236 aa).

This sequence belongs to the cyclin family. Cyclin U/P subfamily.

The polypeptide is Cyclin-P3-1 (CYCP3-1) (Oryza sativa subsp. japonica (Rice)).